The following is a 331-amino-acid chain: Large ribosomal subunit protein uL3 (331 aa).

It belongs to the universal ribosomal protein uL3 family. In terms of assembly, part of the 50S ribosomal subunit. Forms a cluster with proteins L14 and L24e.

One of the primary rRNA binding proteins, it binds directly near the 3'-end of the 23S rRNA, where it nucleates assembly of the 50S subunit. The chain is Large ribosomal subunit protein uL3 from Thermoplasma acidophilum (strain ATCC 25905 / DSM 1728 / JCM 9062 / NBRC 15155 / AMRC-C165).